The chain runs to 419 residues: Creatine kinase S-type, mitochondrial (419 aa).

A mitochondrion-targeting transit peptide spans 1–39; sequence MASTFSKLLTGRNASLLFATLGTSALTTGYLVNRQKVCA. A cardiolipin-binding region spans residues 40 to 64; sequence EARDQHKLFPPSADYPDLRKHNNCM. The 87-residue stretch at 46-132 folds into the Phosphagen kinase N-terminal domain; sequence KLFPPSADYP…FDPVIKLRHN (87 aa). Positions 159–401 constitute a Phosphagen kinase C-terminal domain; that stretch reads YVLSSRVRTG…NYLVDCEKKL (243 aa). ATP-binding positions include 162 to 166 and His-225; that span reads SSRVR. Position 255 is a phosphotyrosine (Tyr-255). ATP is bound by residues Arg-270, Arg-326, 354–359, and Asp-369; that span reads RGTGGV. Thr-356 bears the Phosphothreonine mark.

It belongs to the ATP:guanido phosphotransferase family. Exists as an octamer composed of four CKMT2 homodimers.

The protein localises to the mitochondrion inner membrane. The catalysed reaction is creatine + ATP = N-phosphocreatine + ADP + H(+). In terms of biological role, reversibly catalyzes the transfer of phosphate between ATP and various phosphogens (e.g. creatine phosphate). Creatine kinase isoenzymes play a central role in energy transduction in tissues with large, fluctuating energy demands, such as skeletal muscle, heart, brain and spermatozoa. The protein is Creatine kinase S-type, mitochondrial (CKMT2) of Oryctolagus cuniculus (Rabbit).